Consider the following 642-residue polypeptide: 5-aminolevulinate synthase, non-specific, mitochondrial (642 aa).

Residues Met1–Gln56 constitute a mitochondrion transit peptide. The segment at Ser51–Lys109 is disordered. Residues Pro79–Gly90 show a composition bias toward polar residues. Residues Ser99–Ser108 are compositionally biased toward low complexity. Positions 219, 336, and 355 each coordinate substrate. Pyridoxal 5'-phosphate contacts are provided by Ser388, His416, and Thr444. Residue Lys447 is part of the active site. Lys447 is modified (N6-(pyridoxal phosphate)lysine). Pyridoxal 5'-phosphate is bound by residues Thr476 and Thr477. Residue Thr564 coordinates substrate. Pro578 bears the Hydroxyproline mark.

Belongs to the class-II pyridoxal-phosphate-dependent aminotransferase family. In terms of assembly, homodimer. Interacts (hydroxylated form) with VHL. Pyridoxal 5'-phosphate is required as a cofactor. In terms of processing, in normoxia, is hydroxylated at Pro-578, promoting interaction with VHL, initiating ubiquitination and subsequent degradation via the proteasome. Ubiquitinated; in normoxia following hydroxylation and interaction with VHL, leading to its subsequent degradation via the proteasome. As to expression, expressed in the liver, kidney, brain and testis.

It localises to the mitochondrion inner membrane. The enzyme catalyses succinyl-CoA + glycine + H(+) = 5-aminolevulinate + CO2 + CoA. The protein operates within porphyrin-containing compound metabolism; protoporphyrin-IX biosynthesis; 5-aminolevulinate from glycine: step 1/1. Its function is as follows. Catalyzes the pyridoxal 5'-phosphate (PLP)-dependent condensation of succinyl-CoA and glycine to form aminolevulinic acid (ALA), with CoA and CO2 as by-products. The sequence is that of 5-aminolevulinate synthase, non-specific, mitochondrial (Alas1) from Rattus norvegicus (Rat).